We begin with the raw amino-acid sequence, 604 residues long: M-phase inducer phosphatase cdc-25.1 (604 aa).

2 disordered regions span residues 33–67 (PKTLFEEDGSSRDSGVSMTSCSDKSDASPEEDVDF) and 127–188 (EKRV…PFGD). Polar residues predominate over residues 44-54 (RDSGVSMTSCS). Residues 127–138 (EKRVMSERPTDN) show a composition bias toward basic and acidic residues. One can recognise a Rhodanese domain in the interval 305–413 (FDKKYIIVDC…LWSTAECRQI (109 aa)). 2 disordered regions span residues 443 to 464 (ASLKPNGETSHREEKKKRCTRS) and 562 to 588 (DFPDRPSESSSTTPAGEHLPLGEGGHQ).

Belongs to the MPI phosphatase family.

It carries out the reaction O-phospho-L-tyrosyl-[protein] + H2O = L-tyrosyl-[protein] + phosphate. In Caenorhabditis elegans, this protein is M-phase inducer phosphatase cdc-25.1 (cdc-25.1).